Here is a 326-residue protein sequence, read N- to C-terminus: Glutaminase 2 (326 aa).

The substrate site is built by Ser73, Asn125, Glu169, Asn176, Tyr200, Tyr252, and Val270.

It belongs to the glutaminase family. In terms of assembly, homotetramer.

It catalyses the reaction L-glutamine + H2O = L-glutamate + NH4(+). This chain is Glutaminase 2, found in Bacillus anthracis.